The primary structure comprises 136 residues: Transcription antitermination protein NusB (136 aa).

It belongs to the NusB family.

Functionally, involved in transcription antitermination. Required for transcription of ribosomal RNA (rRNA) genes. Binds specifically to the boxA antiterminator sequence of the ribosomal RNA (rrn) operons. This Pseudarthrobacter chlorophenolicus (strain ATCC 700700 / DSM 12829 / CIP 107037 / JCM 12360 / KCTC 9906 / NCIMB 13794 / A6) (Arthrobacter chlorophenolicus) protein is Transcription antitermination protein NusB.